A 191-amino-acid polypeptide reads, in one-letter code: Potassium-transporting ATPase KdpC subunit (191 aa).

The chain crosses the membrane as a helical span at residues 6–26 (PALVLFILLTLLTGGVYPLLT).

Belongs to the KdpC family. As to quaternary structure, the system is composed of three essential subunits: KdpA, KdpB and KdpC.

It is found in the cell inner membrane. Functionally, part of the high-affinity ATP-driven potassium transport (or Kdp) system, which catalyzes the hydrolysis of ATP coupled with the electrogenic transport of potassium into the cytoplasm. This subunit acts as a catalytic chaperone that increases the ATP-binding affinity of the ATP-hydrolyzing subunit KdpB by the formation of a transient KdpB/KdpC/ATP ternary complex. This Klebsiella pneumoniae subsp. pneumoniae (strain ATCC 700721 / MGH 78578) protein is Potassium-transporting ATPase KdpC subunit.